We begin with the raw amino-acid sequence, 180 residues long: Interleukin-1-binding protein (180 aa).

The signal sequence occupies residues 1 to 20 (MSILPVIFLPIFFYSPFVQT). 3 N-linked (GlcNAc...) asparagine; by host glycosylation sites follow: N80, N103, and N113.

It belongs to the interleukin-1 receptor family. In terms of assembly, interacts with mouse Il1b.

Its subcellular location is the secreted. May reduce the host inflammatory response by interacting with inteleukin-1 beta (Il1b) and thus decreasing the association between IL1B and its cellular receptor. In Monkeypox virus, this protein is Interleukin-1-binding protein (OPG201).